The primary structure comprises 303 residues: MGGFGAHIKSNRTEITIQHKGKITDIPIKDLSHFLLIGGHTIQTSTITSLVKEGVFISFCESDGEPVGYISPYDYSLFKEIQNLQKTAAPYSYALACANESIKSRILAIEKYAEEIGPEILFSGELDILTGYAKELENMVLIEELRRIEQLVRDMYYEILGRLISPTYLFKRRTSRPYLDPVNAIFSFGYGMLSSACTRAVIGGHLDPGHGYLNRGNQALVQDLMNCWKPKMIDNHAIGFLRSGRLHQNGYERTKDRCILHDEVIEELIHLFSKSIQEELINTQIDVLIQSLRGEAQFSIIKP.

Glu-149 is a binding site for Mn(2+).

This sequence belongs to the CRISPR-associated endonuclease Cas1 family. Homodimer, forms a heterotetramer with a Cas2 homodimer. Requires Mg(2+) as cofactor. Mn(2+) is required as a cofactor.

Functionally, CRISPR (clustered regularly interspaced short palindromic repeat), is an adaptive immune system that provides protection against mobile genetic elements (viruses, transposable elements and conjugative plasmids). CRISPR clusters contain sequences complementary to antecedent mobile elements and target invading nucleic acids. CRISPR clusters are transcribed and processed into CRISPR RNA (crRNA). Acts as a dsDNA endonuclease. Involved in the integration of spacer DNA into the CRISPR cassette. The protein is Putative CRISPR-associated endonuclease Cas1 2 of Methanospirillum hungatei JF-1 (strain ATCC 27890 / DSM 864 / NBRC 100397 / JF-1).